Reading from the N-terminus, the 313-residue chain is Olfactory receptor 1M1 (313 aa).

Residues 1 to 25 (MEPQNHTSASEFILLGLSEKPDHDP) are Extracellular-facing. Residue Asn-5 is glycosylated (N-linked (GlcNAc...) asparagine). Residues 26–46 (VLFSLFLCMYMITVVGNLLII) form a helical membrane-spanning segment. Residues 47-54 (LAISFDSH) lie on the Cytoplasmic side of the membrane. A helical transmembrane segment spans residues 55 to 75 (LHTPMYFFLANLSLVDFCLAT). Topologically, residues 76 to 97 (NTVPKMLVNIQTRNKSISYPCC) are extracellular. A glycan (N-linked (GlcNAc...) asparagine) is linked at Asn-89. Cys-97 and Cys-179 are joined by a disulfide. Residues 98 to 118 (LTQMYFFHFFGIMDSVLIAVM) traverse the membrane as a helical segment. Residues 119–142 (AYDRFVAICHPLHYSTIMSPRLCG) are Cytoplasmic-facing. A helical membrane pass occupies residues 143-163 (LLVGVPWVYSCFISLTHILLM). Topologically, residues 164 to 196 (ARLVFCGKNELPHYFCDLTPLLRLSCTDTTVNK) are extracellular. The chain crosses the membrane as a helical span at residues 197 to 217 (IFVLIVAGMVIATPFVCILAS). Residues 218–244 (YARIIVAIMKVPSAGGRKKAFSTCSSH) are Cytoplasmic-facing. A helical transmembrane segment spans residues 245-265 (LSVVALFYGTTIGVYLCPSSV). The Extracellular segment spans residues 266 to 274 (RTAVKEKAS). The helical transmembrane segment at 275–292 (AVMYTAVTPMLNPFIYSL) threads the bilayer. The Cytoplasmic portion of the chain corresponds to 293 to 313 (RNRDLKGALKKIINRKISTSS).

This sequence belongs to the G-protein coupled receptor 1 family. In terms of tissue distribution, expressed in testis.

Its subcellular location is the cell membrane. Its function is as follows. Odorant receptor. The chain is Olfactory receptor 1M1 from Mus musculus (Mouse).